Reading from the N-terminus, the 159-residue chain is Phosphopantetheine adenylyltransferase (159 aa).

Ser9 contributes to the substrate binding site. ATP is bound by residues 9–10 (SF) and His17. The substrate site is built by Lys41, Leu74, and Lys88. ATP contacts are provided by residues 89–91 (GLR), Glu99, and 123–129 (YLHLSST).

Belongs to the bacterial CoaD family. Homohexamer. Requires Mg(2+) as cofactor.

The protein localises to the cytoplasm. It catalyses the reaction (R)-4'-phosphopantetheine + ATP + H(+) = 3'-dephospho-CoA + diphosphate. It functions in the pathway cofactor biosynthesis; coenzyme A biosynthesis; CoA from (R)-pantothenate: step 4/5. Functionally, reversibly transfers an adenylyl group from ATP to 4'-phosphopantetheine, yielding dephospho-CoA (dPCoA) and pyrophosphate. This chain is Phosphopantetheine adenylyltransferase, found in Arthrobacter sp. (strain FB24).